The primary structure comprises 102 residues: Large ribosomal subunit protein bL21 (102 aa).

The protein belongs to the bacterial ribosomal protein bL21 family. Part of the 50S ribosomal subunit. Contacts protein L20.

In terms of biological role, this protein binds to 23S rRNA in the presence of protein L20. This chain is Large ribosomal subunit protein bL21, found in Desulfovibrio desulfuricans (strain ATCC 27774 / DSM 6949 / MB).